The sequence spans 426 residues: 3-phosphoshikimate 1-carboxyvinyltransferase (426 aa).

3-phosphoshikimate-binding residues include lysine 20, serine 21, and arginine 25. Residue lysine 20 participates in phosphoenolpyruvate binding. The phosphoenolpyruvate site is built by glycine 92 and arginine 120. 4 residues coordinate 3-phosphoshikimate: serine 166, glutamine 168, aspartate 312, and lysine 339. Glutamine 168 is a phosphoenolpyruvate binding site. Residue aspartate 312 is the Proton acceptor of the active site. The phosphoenolpyruvate site is built by arginine 343 and arginine 385.

This sequence belongs to the EPSP synthase family. In terms of assembly, monomer.

It localises to the cytoplasm. It catalyses the reaction 3-phosphoshikimate + phosphoenolpyruvate = 5-O-(1-carboxyvinyl)-3-phosphoshikimate + phosphate. Its pathway is metabolic intermediate biosynthesis; chorismate biosynthesis; chorismate from D-erythrose 4-phosphate and phosphoenolpyruvate: step 6/7. Catalyzes the transfer of the enolpyruvyl moiety of phosphoenolpyruvate (PEP) to the 5-hydroxyl of shikimate-3-phosphate (S3P) to produce enolpyruvyl shikimate-3-phosphate and inorganic phosphate. The chain is 3-phosphoshikimate 1-carboxyvinyltransferase from Enterococcus faecalis (strain ATCC 700802 / V583).